The chain runs to 493 residues: Glutamyl-tRNA(Gln) amidotransferase subunit A (493 aa).

Active-site charge relay system residues include lysine 78 and serine 158. Serine 182 acts as the Acyl-ester intermediate in catalysis.

It belongs to the amidase family. GatA subfamily. In terms of assembly, heterotrimer of A, B and C subunits.

The enzyme catalyses L-glutamyl-tRNA(Gln) + L-glutamine + ATP + H2O = L-glutaminyl-tRNA(Gln) + L-glutamate + ADP + phosphate + H(+). Allows the formation of correctly charged Gln-tRNA(Gln) through the transamidation of misacylated Glu-tRNA(Gln) in organisms which lack glutaminyl-tRNA synthetase. The reaction takes place in the presence of glutamine and ATP through an activated gamma-phospho-Glu-tRNA(Gln). The protein is Glutamyl-tRNA(Gln) amidotransferase subunit A of Rickettsia canadensis (strain McKiel).